The following is a 344-amino-acid chain: Fructose-1,6-bisphosphatase class 1 (344 aa).

The Mg(2+) site is built by Glu92, Asp115, Leu117, and Asp118. Substrate contacts are provided by residues 118-121, Asn211, Tyr244, and Lys274; that span reads DGSS. Mg(2+) is bound at residue Glu280.

It belongs to the FBPase class 1 family. As to quaternary structure, homotetramer. The cofactor is Mg(2+).

Its subcellular location is the cytoplasm. It carries out the reaction beta-D-fructose 1,6-bisphosphate + H2O = beta-D-fructose 6-phosphate + phosphate. It participates in carbohydrate biosynthesis; gluconeogenesis. The chain is Fructose-1,6-bisphosphatase class 1 from Aeromonas salmonicida (strain A449).